We begin with the raw amino-acid sequence, 359 residues long: Photosystem II protein D1 3 (359 aa).

Helical transmembrane passes span 29-46, 118-133, and 142-156; these read YVGW…AATI, HFLI…EWEL, and WICV…AASA. H118 serves as a coordination point for chlorophyll a. Residue Y126 participates in pheophytin a binding. [CaMn4O5] cluster-binding residues include D170 and E189. The helical transmembrane segment at 197–218 threads the bilayer; that stretch reads FHMLGVAGVFGGSLFSAMHGSL. H198 serves as a coordination point for chlorophyll a. A quinone is bound by residues H215 and 264–265; that span reads SF. Fe cation is bound at residue H215. Position 272 (H272) interacts with Fe cation. The chain crosses the membrane as a helical span at residues 274 to 288; that stretch reads FLAAWPVVGIWFTAL. Positions 332, 333, 342, and 344 each coordinate [CaMn4O5] cluster. Residues 345–359 constitute a propeptide that is removed on maturation; it reads AAESTPVALQVPAIG.

The protein belongs to the reaction center PufL/M/PsbA/D family. In terms of assembly, PSII is composed of 1 copy each of membrane proteins PsbA, PsbB, PsbC, PsbD, PsbE, PsbF, PsbH, PsbI, PsbJ, PsbK, PsbL, PsbM, PsbT, PsbX, PsbY, PsbZ, Psb30/Ycf12, peripheral proteins PsbO, CyanoQ (PsbQ), PsbU, PsbV and a large number of cofactors. It forms dimeric complexes. It depends on The D1/D2 heterodimer binds P680, chlorophylls that are the primary electron donor of PSII, and subsequent electron acceptors. It shares a non-heme iron and each subunit binds pheophytin, quinone, additional chlorophylls, carotenoids and lipids. D1 provides most of the ligands for the Mn4-Ca-O5 cluster of the oxygen-evolving complex (OEC). There is also a Cl(-1) ion associated with D1 and D2, which is required for oxygen evolution. The PSII complex binds additional chlorophylls, carotenoids and specific lipids. as a cofactor. In terms of processing, tyr-161 forms a radical intermediate that is referred to as redox-active TyrZ, YZ or Y-Z. Post-translationally, C-terminally processed by CtpA; processing is essential to allow assembly of the oxygen-evolving complex and thus photosynthetic growth.

Its subcellular location is the cellular thylakoid membrane. It catalyses the reaction 2 a plastoquinone + 4 hnu + 2 H2O = 2 a plastoquinol + O2. Its function is as follows. Photosystem II (PSII) is a light-driven water:plastoquinone oxidoreductase that uses light energy to abstract electrons from H(2)O, generating O(2) and a proton gradient subsequently used for ATP formation. It consists of a core antenna complex that captures photons, and an electron transfer chain that converts photonic excitation into a charge separation. The D1/D2 (PsbA/PsbD) reaction center heterodimer binds P680, the primary electron donor of PSII as well as several subsequent electron acceptors. The polypeptide is Photosystem II protein D1 3 (Parasynechococcus marenigrum (strain WH8102)).